Reading from the N-terminus, the 378-residue chain is UDP-N-acetylglucosamine--N-acetylmuramyl-(pentapeptide) pyrophosphoryl-undecaprenol N-acetylglucosamine transferase (378 aa).

Residues 13–15 (TGG), asparagine 124, arginine 165, serine 193, and glutamine 294 each bind UDP-N-acetyl-alpha-D-glucosamine.

It belongs to the glycosyltransferase 28 family. MurG subfamily.

The protein resides in the cell inner membrane. It carries out the reaction di-trans,octa-cis-undecaprenyl diphospho-N-acetyl-alpha-D-muramoyl-L-alanyl-D-glutamyl-meso-2,6-diaminopimeloyl-D-alanyl-D-alanine + UDP-N-acetyl-alpha-D-glucosamine = di-trans,octa-cis-undecaprenyl diphospho-[N-acetyl-alpha-D-glucosaminyl-(1-&gt;4)]-N-acetyl-alpha-D-muramoyl-L-alanyl-D-glutamyl-meso-2,6-diaminopimeloyl-D-alanyl-D-alanine + UDP + H(+). It functions in the pathway cell wall biogenesis; peptidoglycan biosynthesis. Functionally, cell wall formation. Catalyzes the transfer of a GlcNAc subunit on undecaprenyl-pyrophosphoryl-MurNAc-pentapeptide (lipid intermediate I) to form undecaprenyl-pyrophosphoryl-MurNAc-(pentapeptide)GlcNAc (lipid intermediate II). This Agrobacterium fabrum (strain C58 / ATCC 33970) (Agrobacterium tumefaciens (strain C58)) protein is UDP-N-acetylglucosamine--N-acetylmuramyl-(pentapeptide) pyrophosphoryl-undecaprenol N-acetylglucosamine transferase.